A 380-amino-acid polypeptide reads, in one-letter code: Cytochrome b (380 aa).

A run of 4 helical transmembrane segments spans residues 34–54, 78–99, 114–134, and 179–199; these read FGSL…LLAM, WLIR…YLHI, WNTG…GYVL, and FFAL…IHLT. His84 and His98 together coordinate heme b. The heme b site is built by His183 and His197. His202 serves as a coordination point for a ubiquinone. The next 4 membrane-spanning stretches (helical) occupy residues 227-247, 289-309, 321-341, and 348-368; these read LKDI…ALFS, LGGV…PFLH, LSQL…WVGS, and FIII…ILFP.

This sequence belongs to the cytochrome b family. In terms of assembly, the cytochrome bc1 complex contains 11 subunits: 3 respiratory subunits (MT-CYB, CYC1 and UQCRFS1), 2 core proteins (UQCRC1 and UQCRC2) and 6 low-molecular weight proteins (UQCRH/QCR6, UQCRB/QCR7, UQCRQ/QCR8, UQCR10/QCR9, UQCR11/QCR10 and a cleavage product of UQCRFS1). This cytochrome bc1 complex then forms a dimer. Heme b is required as a cofactor.

It is found in the mitochondrion inner membrane. Component of the ubiquinol-cytochrome c reductase complex (complex III or cytochrome b-c1 complex) that is part of the mitochondrial respiratory chain. The b-c1 complex mediates electron transfer from ubiquinol to cytochrome c. Contributes to the generation of a proton gradient across the mitochondrial membrane that is then used for ATP synthesis. This chain is Cytochrome b (MT-CYB), found in Pterodroma hypoleuca (Bonin petrel).